We begin with the raw amino-acid sequence, 280 residues long: 3-methyl-2-oxobutanoate hydroxymethyltransferase (280 aa).

Residues Asp60 and Asp99 each coordinate Mg(2+). Residues 60–61 (DS), Asp99, and Lys129 contribute to the 3-methyl-2-oxobutanoate site. Position 131 (Glu131) interacts with Mg(2+). Glu198 (proton acceptor) is an active-site residue.

The protein belongs to the PanB family. In terms of assembly, homodecamer; pentamer of dimers. Mg(2+) is required as a cofactor.

It localises to the cytoplasm. The enzyme catalyses 3-methyl-2-oxobutanoate + (6R)-5,10-methylene-5,6,7,8-tetrahydrofolate + H2O = 2-dehydropantoate + (6S)-5,6,7,8-tetrahydrofolate. It functions in the pathway cofactor biosynthesis; (R)-pantothenate biosynthesis; (R)-pantoate from 3-methyl-2-oxobutanoate: step 1/2. In terms of biological role, catalyzes the reversible reaction in which hydroxymethyl group from 5,10-methylenetetrahydrofolate is transferred onto alpha-ketoisovalerate to form ketopantoate. This Thermobifida fusca (strain YX) protein is 3-methyl-2-oxobutanoate hydroxymethyltransferase.